Consider the following 243-residue polypeptide: NAD(P)H-quinone oxidoreductase subunit K, chloroplastic (243 aa).

Positions 65, 66, 130, and 161 each coordinate [4Fe-4S] cluster.

Belongs to the complex I 20 kDa subunit family. NDH is composed of at least 16 different subunits, 5 of which are encoded in the nucleus. [4Fe-4S] cluster is required as a cofactor.

It localises to the plastid. The protein localises to the chloroplast thylakoid membrane. It carries out the reaction a plastoquinone + NADH + (n+1) H(+)(in) = a plastoquinol + NAD(+) + n H(+)(out). It catalyses the reaction a plastoquinone + NADPH + (n+1) H(+)(in) = a plastoquinol + NADP(+) + n H(+)(out). Its function is as follows. NDH shuttles electrons from NAD(P)H:plastoquinone, via FMN and iron-sulfur (Fe-S) centers, to quinones in the photosynthetic chain and possibly in a chloroplast respiratory chain. The immediate electron acceptor for the enzyme in this species is believed to be plastoquinone. Couples the redox reaction to proton translocation, and thus conserves the redox energy in a proton gradient. This Marchantia polymorpha (Common liverwort) protein is NAD(P)H-quinone oxidoreductase subunit K, chloroplastic.